The sequence spans 260 residues: Rhythmically expressed gene 2 protein (260 aa).

The sequence is that of Rhythmically expressed gene 2 protein (Reg-2) from Drosophila melanogaster (Fruit fly).